We begin with the raw amino-acid sequence, 78 residues long: Serine rich endogenous peptide 12 (78 aa).

The signal sequence occupies residues 1–24 (MRNTISSKMGQVLIVLLLLCTVLC). Positions 25–43 (RTESALPSGQHSVLLTGRR) are cleaved as a propeptide — removed in mature form. The tract at residues 47 to 78 (SGASGPVRSSQSSQAGGRFNDADPIAIDYGKY) is disordered. The SCOOP motif signature appears at 50 to 64 (SGPVRSSQSSQAGGR). The SxS motif essential for MIK2 binding signature appears at 56–58 (SQS).

This sequence belongs to the serine rich endogenous peptide (SCOOP) phytocytokine family. Interacts with MIK2 (via extracellular leucine-rich repeat domain); this interaction triggers the formation of complex between MIK2 and the BAK1/SERK3 and SERK4 coreceptors, and subsequent BAK1 activation by phosphorylation on 'Ser-612'. As to expression, mostly expressed in the whole root system, and, to a lower extent, in seedlings shoots.

Its subcellular location is the cell membrane. It localises to the secreted. The protein localises to the extracellular space. It is found in the apoplast. Brassicaceae-specific phytocytokine (plant endogenous peptide released into the apoplast) perceived by MIK2 in a BAK1/SERK3 and SERK4 coreceptors-dependent manner, that modulates various physiological and antimicrobial processes including root growth prevention, phospholipid signaling pathway activation (e.g. accumulation of phosphatidic acid (PA), but transient reduction of phosphatidylinositol 4,5-bisphosphate (PIP(2)) levels) and reactive oxygen species (ROS) response regulation. Moderates primary root growth, and regulates root meristems and cell elongation; this root growth regulation is associated with the modulation of ROS metabolism and alteration of cell wall structure, and depends on variations in many genes expression. Promotes ROS (e.g. superoxide anion O(2) and hydrogen peroxide H(2)O(2)) production and MAPK (e.g. MPK3, MPK4 and MPK6) activation in a MIK2-dependent manner, thus leading to the up-regulation of immune-related marker genes (e.g. WRKY30, WRKY33 and CYP81F2). Involved in biotic and oxidative stress responses; acts as a negative regulator of defense against necrotrophic pathogens such as the bacteria Erwinia amylovora and the fungus Alternaria brassicicola. Able to prime defense responses against the pathogenic bacteria Pseudomonas syringae pv. tomato DC3000. Contributes to the triggering of defense responses toward generalist herbivores such as Spodoptera littoralis, probably via the activation of jasmonate and indole glucosinolate biosynthesis. Triggers the expression of several PROSCOOP genes (e.g. PROSCOOP3, PROSCOOP7, PROSCOOP12 and PROSCOOP13). In Arabidopsis thaliana (Mouse-ear cress), this protein is Serine rich endogenous peptide 12.